The chain runs to 238 residues: Small ribosomal subunit protein uS3 (238 aa).

Residues Met-39–Arg-107 form the KH type-2 domain. The segment covering Pro-212–Ala-222 has biased composition (basic and acidic residues). The segment at Pro-212 to Ala-238 is disordered.

Belongs to the universal ribosomal protein uS3 family. As to quaternary structure, part of the 30S ribosomal subunit. Forms a tight complex with proteins S10 and S14.

In terms of biological role, binds the lower part of the 30S subunit head. Binds mRNA in the 70S ribosome, positioning it for translation. This is Small ribosomal subunit protein uS3 from Cereibacter sphaeroides (strain ATCC 17029 / ATH 2.4.9) (Rhodobacter sphaeroides).